Here is a 289-residue protein sequence, read N- to C-terminus: Acetyl-coenzyme A carboxylase carboxyl transferase subunit beta (289 aa).

In terms of domain architecture, CoA carboxyltransferase N-terminal spans 28-289 (VMTKCPKCKK…QGGEMAVWQS (262 aa)). Zn(2+)-binding residues include C32, C35, C51, and C54. The segment at 32–54 (CPKCKKIMYTKEVLKNLKVCVNC) adopts a C4-type zinc-finger fold.

This sequence belongs to the AccD/PCCB family. Acetyl-CoA carboxylase is a heterohexamer composed of biotin carboxyl carrier protein (AccB), biotin carboxylase (AccC) and two subunits each of ACCase subunit alpha (AccA) and ACCase subunit beta (AccD). Zn(2+) serves as cofactor.

It is found in the cytoplasm. The enzyme catalyses N(6)-carboxybiotinyl-L-lysyl-[protein] + acetyl-CoA = N(6)-biotinyl-L-lysyl-[protein] + malonyl-CoA. It functions in the pathway lipid metabolism; malonyl-CoA biosynthesis; malonyl-CoA from acetyl-CoA: step 1/1. Its function is as follows. Component of the acetyl coenzyme A carboxylase (ACC) complex. Biotin carboxylase (BC) catalyzes the carboxylation of biotin on its carrier protein (BCCP) and then the CO(2) group is transferred by the transcarboxylase to acetyl-CoA to form malonyl-CoA. The sequence is that of Acetyl-coenzyme A carboxylase carboxyl transferase subunit beta from Bacillus thuringiensis (strain Al Hakam).